The primary structure comprises 542 residues: Hydroxylamine reductase (542 aa).

[4Fe-4S] cluster-binding residues include Cys3, Cys6, Cys15, and Cys21. Residues His243, Glu267, Cys311, Cys398, Cys426, Cys451, Glu485, and Lys487 each coordinate hybrid [4Fe-2O-2S] cluster. Position 398 is a cysteine persulfide (Cys398).

Belongs to the HCP family. It depends on [4Fe-4S] cluster as a cofactor. The cofactor is hybrid [4Fe-2O-2S] cluster.

The protein localises to the cytoplasm. The catalysed reaction is A + NH4(+) + H2O = hydroxylamine + AH2 + H(+). Catalyzes the reduction of hydroxylamine to form NH(3) and H(2)O. This Syntrophobacter fumaroxidans (strain DSM 10017 / MPOB) protein is Hydroxylamine reductase.